A 1136-amino-acid polypeptide reads, in one-letter code: Alpha-1,4-glucan:maltose-1-phosphate maltosyltransferase (1136 aa).

Residues 1-439 (METRPSFAPN…TLLRAQRARP (439 aa)) form a unknown region. Residues 440-1136 (VTTAPAEDRR…DVPAQEVHER (697 aa)) are maltosyltransferase. Residues K710, Q770, and D805 each coordinate alpha-maltose 1-phosphate. Catalysis depends on D842, which acts as the Nucleophile. N843 lines the alpha-maltose 1-phosphate pocket. Catalysis depends on E871, which acts as the Proton donor. 982-983 (KY) serves as a coordination point for alpha-maltose 1-phosphate.

In the C-terminal section; belongs to the glycosyl hydrolase 13 family. GlgE subfamily. As to quaternary structure, homodimer.

It catalyses the reaction alpha-maltose 1-phosphate + [(1-&gt;4)-alpha-D-glucosyl](n) = [(1-&gt;4)-alpha-D-glucosyl](n+2) + phosphate. In terms of biological role, maltosyltransferase that uses maltose 1-phosphate (M1P) as the sugar donor to elongate linear or branched alpha-(1-&gt;4)-glucans. Is involved in a branched alpha-glucan biosynthetic pathway from trehalose, together with TreS, Mak and GlgB. The chain is Alpha-1,4-glucan:maltose-1-phosphate maltosyltransferase (glgE) from Burkholderia pseudomallei (strain K96243).